Here is a 360-residue protein sequence, read N- to C-terminus: Phenylalanine--tRNA ligase alpha subunit (360 aa).

Glu264 provides a ligand contact to Mg(2+).

It belongs to the class-II aminoacyl-tRNA synthetase family. Phe-tRNA synthetase alpha subunit type 1 subfamily. Tetramer of two alpha and two beta subunits. Mg(2+) is required as a cofactor.

Its subcellular location is the cytoplasm. It carries out the reaction tRNA(Phe) + L-phenylalanine + ATP = L-phenylalanyl-tRNA(Phe) + AMP + diphosphate + H(+). This is Phenylalanine--tRNA ligase alpha subunit from Streptomyces avermitilis (strain ATCC 31267 / DSM 46492 / JCM 5070 / NBRC 14893 / NCIMB 12804 / NRRL 8165 / MA-4680).